The chain runs to 155 residues: Small ribosomal subunit protein uS7 (155 aa).

The protein belongs to the universal ribosomal protein uS7 family. In terms of assembly, part of the 30S ribosomal subunit. Contacts proteins S9 and S11.

Functionally, one of the primary rRNA binding proteins, it binds directly to 16S rRNA where it nucleates assembly of the head domain of the 30S subunit. Is located at the subunit interface close to the decoding center, probably blocks exit of the E-site tRNA. The protein is Small ribosomal subunit protein uS7 of Helicobacter acinonychis (strain Sheeba).